The following is an 858-amino-acid chain: Potassium transporter 7 (858 aa).

2 stretches are compositionally biased toward acidic residues: residues 1 to 16 (MAEE…EEID) and 38 to 53 (QDDD…DNDG). Residues 1–68 (MAEESSMEGS…LESDEDEIPE (68 aa)) form a disordered region. The Cytoplasmic portion of the chain corresponds to 1-104 (MAEESSMEGS…DYEDLTVGRK (104 aa)). A helical membrane pass occupies residues 105-125 (VLLAFQTLGVVFGDVGTSPLY). The Extracellular portion of the chain corresponds to 126 to 147 (TFSVMFSKSPVQEKEDVIGALS). Residues 148 to 168 (LVLYTLLLVPLIKYVLVVLWA) form a helical membrane-spanning segment. At 169 to 232 (NDDGEGGTFA…KLENSLILKK (64 aa)) the chain is on the cytoplasmic side. The helical transmembrane segment at 233–253 (ILLVLVLAGTSMVIADGVVTP) threads the bilayer. At 254–269 (AMSVMSAVGGLKVGVD) the chain is on the extracellular side. The helical transmembrane segment at 270–290 (VVEQDQVVMISVAFLVILFSL) threads the bilayer. At 291 to 297 (QKYGTSK) the chain is on the cytoplasmic side. The helical transmembrane segment at 298 to 318 (MGLVVGPALLIWFCSLAGIGI) threads the bilayer. Over 319-345 (YNLIKYDSSVYRAFNPVHIYYFFKRNS) the chain is Extracellular. A helical transmembrane segment spans residues 346–366 (INAWYALGGCILCATGSEALF). The Cytoplasmic portion of the chain corresponds to 367 to 380 (ADLCYFSVRSVQLT). The helical transmembrane segment at 381-401 (FVCLVLPCLMLGYMGQAAYLM) threads the bilayer. Topologically, residues 402-413 (ENHADASQAFFS) are extracellular. Residues 414–434 (SVPGSAFWPVLFIANIAALIA) form a helical membrane-spanning segment. Over 435-470 (SRTMTTATFSCIKQSTALGCFPRLKIIHTSRKFMGQ) the chain is Cytoplasmic. The chain crosses the membrane as a helical span at residues 471–491 (IYIPVLNWFLLAVCLVVVCSI). Topologically, residues 492 to 496 (SSIDE) are extracellular. Residues 497-517 (IGNAYGMAELGVMMTTTILVT) traverse the membrane as a helical segment. Position 518 (leucine 518) is a topological domain, cytoplasmic. The helical transmembrane segment at 519–539 (IMLLIWQINIVIVIAFLVVFL) threads the bilayer. At 540–552 (GVELVFFSSVIAS) the chain is on the extracellular side. The helical transmembrane segment at 553 to 573 (VGDGSWIILVFAVIMFGIMYI) threads the bilayer. At 574–858 (WNYGSKLRYE…LMQVGMTYMV (285 aa)) the chain is on the cytoplasmic side. The segment at 707–731 (QERSLESDGNDDSDSEEDFPGSRVV) is disordered. Acidic residues predominate over residues 714–725 (DGNDDSDSEEDF). Residues serine 719 and serine 721 each carry the phosphoserine modification.

Belongs to the HAK/KUP transporter (TC 2.A.72.3) family.

The protein resides in the cell membrane. Its function is as follows. Probable potassium transporter. The protein is Potassium transporter 7 (POT7) of Arabidopsis thaliana (Mouse-ear cress).